Reading from the N-terminus, the 447-residue chain is N-succinylarginine dihydrolase (447 aa).

Substrate-binding positions include alanine 19–serine 28, asparagine 110, and histidine 137–arginine 138. Residue glutamate 174 is part of the active site. Residue arginine 212 participates in substrate binding. The active site involves histidine 248. Substrate contacts are provided by aspartate 250 and asparagine 359. Cysteine 365 functions as the Nucleophile in the catalytic mechanism.

The protein belongs to the succinylarginine dihydrolase family. In terms of assembly, homodimer.

The catalysed reaction is N(2)-succinyl-L-arginine + 2 H2O + 2 H(+) = N(2)-succinyl-L-ornithine + 2 NH4(+) + CO2. The protein operates within amino-acid degradation; L-arginine degradation via AST pathway; L-glutamate and succinate from L-arginine: step 2/5. Its function is as follows. Catalyzes the hydrolysis of N(2)-succinylarginine into N(2)-succinylornithine, ammonia and CO(2). This chain is N-succinylarginine dihydrolase, found in Citrobacter koseri (strain ATCC BAA-895 / CDC 4225-83 / SGSC4696).